The chain runs to 879 residues: Alanine--tRNA ligase (879 aa).

Zn(2+) is bound by residues histidine 566, histidine 570, cysteine 668, and histidine 672.

The protein belongs to the class-II aminoacyl-tRNA synthetase family. Zn(2+) is required as a cofactor.

It localises to the cytoplasm. It carries out the reaction tRNA(Ala) + L-alanine + ATP = L-alanyl-tRNA(Ala) + AMP + diphosphate. Functionally, catalyzes the attachment of alanine to tRNA(Ala) in a two-step reaction: alanine is first activated by ATP to form Ala-AMP and then transferred to the acceptor end of tRNA(Ala). Also edits incorrectly charged Ser-tRNA(Ala) and Gly-tRNA(Ala) via its editing domain. This chain is Alanine--tRNA ligase, found in Oceanobacillus iheyensis (strain DSM 14371 / CIP 107618 / JCM 11309 / KCTC 3954 / HTE831).